The following is a 457-amino-acid chain: Multidrug resistance protein MdtK (457 aa).

The Cytoplasmic segment spans residues 1-10; the sequence is MQKYISEARL. Residues 11–31 form a helical membrane-spanning segment; it reads LLALAIPVILAQIAQTAMGFV. At 32-52 the chain is on the periplasmic side; sequence DTVMAGGYSATDMAAVAIGTS. The chain crosses the membrane as a helical span at residues 53 to 73; that stretch reads IWLPAILFGHGLLLALTPVIA. The Cytoplasmic portion of the chain corresponds to 74 to 92; sequence QLNGSGRRERIAHQVRQGF. A helical transmembrane segment spans residues 93–113; it reads WLAGFVSVLIMLVLWNAGYII. Topologically, residues 114–126 are periplasmic; the sequence is RSMENIDPALADK. A helical membrane pass occupies residues 127–147; it reads AVGYLRALLWGAPGYLFFQVA. Residues 148–159 lie on the Cytoplasmic side of the membrane; that stretch reads RNQCEGLAKTKP. A helical membrane pass occupies residues 160-180; the sequence is GMVMGFIGLLVNIPVNYIFIY. Residues 181-191 are Periplasmic-facing; the sequence is GHFGMPELSGV. A helical transmembrane segment spans residues 192–212; sequence GCGVATAAVYWAMFLAMVSYI. Topologically, residues 213-242 are cytoplasmic; sequence KRARSMRDIRNEKGTAKPDPAVMKRLIQLG. Residues 243–263 traverse the membrane as a helical segment; sequence LPIALALFFEVTLFAVVALLV. The Periplasmic segment spans residues 264-275; sequence SPLGIVDVAGHQ. The helical transmembrane segment at 276–296 threads the bilayer; that stretch reads IALNFSSLMFVLPMSLAAAVT. Residues 297-313 are Cytoplasmic-facing; it reads IRVGYRLGQGSTLDAQT. A helical membrane pass occupies residues 314–334; that stretch reads AARTGLMVGVCMATLTAIFTV. Over 335–349 the chain is Periplasmic; it reads SLREQIALLYNDNPE. A helical membrane pass occupies residues 350–370; it reads VVTLAAHLMLLAAVYQISDSI. The Cytoplasmic portion of the chain corresponds to 371-386; sequence QVIGSGILRGYKDTRS. Residues 387–407 form a helical membrane-spanning segment; sequence IFYITFTAYWVLGLPSGYILA. Residues 408-417 are Periplasmic-facing; the sequence is LTDLVVEPMG. The helical transmembrane segment at 418–438 threads the bilayer; the sequence is PAGFWIGFIIGLTSAAIMMML. Residues 439 to 457 lie on the Cytoplasmic side of the membrane; that stretch reads RMRFLQRLPSAIILQRASR.

It belongs to the multi antimicrobial extrusion (MATE) (TC 2.A.66.1) family. MdtK subfamily.

The protein resides in the cell inner membrane. Its function is as follows. Multidrug efflux pump that functions probably as a Na(+)/drug antiporter. The polypeptide is Multidrug resistance protein MdtK (Shigella dysenteriae serotype 1 (strain Sd197)).